Here is a 450-residue protein sequence, read N- to C-terminus: Phosphoglucosamine mutase (450 aa).

Residue Ser102 is the Phosphoserine intermediate of the active site. Mg(2+) contacts are provided by Ser102, Asp244, Asp246, and Asp248. Ser102 is subject to Phosphoserine.

The protein belongs to the phosphohexose mutase family. Mg(2+) serves as cofactor. Post-translationally, activated by phosphorylation.

It carries out the reaction alpha-D-glucosamine 1-phosphate = D-glucosamine 6-phosphate. Catalyzes the conversion of glucosamine-6-phosphate to glucosamine-1-phosphate. The polypeptide is Phosphoglucosamine mutase (Nitratidesulfovibrio vulgaris (strain DSM 19637 / Miyazaki F) (Desulfovibrio vulgaris)).